Reading from the N-terminus, the 564-residue chain is Protein CPR-5 (564 aa).

The tract at residues 1 to 87 is disordered; the sequence is MEALLLPPSP…TSNSNSTKRV (87 aa). A compositionally biased stretch (polar residues) spans 12–28; sequence PQNQITNPANSKPNHQS. The segment covering 29–38 has biased composition (basic and acidic residues); it reads GDVHKDETMM. The segment covering 69 to 84 has biased composition (low complexity); sequence SSSYCSTSSTSNSNST. Transmembrane regions (helical) follow at residues 347-367, 411-431, 443-463, 472-492, and 526-546; these read IMDWLLVSVFSMLASMVLGVY, VRVWVQIFFGVLMIIVFTYFL, PISFIVLFLGIFCGVSGKLCV, LWLIVWEVFCLLQFVANVFTL, and VYVVILFVLPVINGLLPFATF.

Interacts with SIM and SMR1. Ubiquitous.

It is found in the membrane. Its subcellular location is the nucleus membrane. Its function is as follows. May play a role in transcriptional processes. Negatively regulates the senescence and chlorotic lesions induced by biotic (e.g. pathogens) and abiotic (e.g. sugars, darkness) agents, probably by controlling programmed cell death (pcd). Negative regulator of plant programmed cell death (PCD) and effector-triggered immunity (ETI). Promotes cell division and endoreduplication (e.g. in trichomes). In Arabidopsis thaliana (Mouse-ear cress), this protein is Protein CPR-5.